Here is a 659-residue protein sequence, read N- to C-terminus: MERINFIFGIHNHQPLGNFGWVFEEAYNRSYRPFMEILEEFPEMKVNVHFSGPLLEWIEENKPDYLDLLRSLIKRGQLEIVVAGFYEPVLAAIPKEDRLVQIEMLKDYARKLGYDAKGVWLTERVWQPELVKSLREAGIEYVVVDDYHFMSAGLSKEELFWPYYTEDGGEVITVFPIDEKLRYLIPFRPVKKTIEYLESLTSDDPSKVAVFHDDGEKFGVWPGTYEWVYEKGWLREFFDAITSNEKINLMTYSEYLSKFTPRGLVYLPIASYFEMSEWSLPAKQAKLFVEFVEQLKEEGKFEKYRVFVRGGIWKNFFFKYPESNFMHKRMLMVSKAVRDNPEARKYILKAQCNDAYWHGVFGGIYLPHLRRTVWENIIKAQRYLKPENKILDVDFDGRAEIMVENDGFIATIKPHYGGSIFELSSKRKAVNYNDVLPRRWEHYHEVPEATKPEKESEEGIASIHELGKQIPEEIRRELAYDWQLRAILQDHFIKPEETLDNYRLVKYHELGDFVNQPYEYEMIENGVKLWREGGVYAEEKIPARVEKKIELTEDGFIAKYRVLLEKPYKALFGVEINLAVHSVMEKPEEFEAKEFEVNDPYGIGKVRIELDKAAKVWKFPIKTLSQSEAGWDFIQQGVSYTMLFPIEKELEFTVRFREL.

Residue Glu123 is the Nucleophile of the active site. Asp214 (proton donor) is an active-site residue.

This sequence belongs to the glycosyl hydrolase 57 family. In terms of assembly, homodimer.

The enzyme catalyses Transfers a segment of a (1-&gt;4)-alpha-D-glucan to a new position in an acceptor, which may be glucose or a (1-&gt;4)-alpha-D-glucan.. Inhibited by p-chloromercuribenzoic acid, monoiodoacetic acid, mercury and nickel ions. Functionally, catalyzes the transglycosylation of maltooligosaccharides, yielding maltooligosaccharides of various lengths and glucose. Maltose and glucose can be used as acceptors in the transfer reaction. This Thermococcus litoralis (strain ATCC 51850 / DSM 5473 / JCM 8560 / NS-C) protein is 4-alpha-glucanotransferase (jgt).